The primary structure comprises 135 residues: Small ribosomal subunit protein uS11 (135 aa).

Positions 1 to 10 (MPPKSRTATA) are enriched in polar residues. Disordered stretches follow at residues 1–27 (MPPK…HGHA) and 114–135 (GAIQ…RRRV). Over residues 12–27 (RKPRRKEKKNVAHGHA) the composition is skewed to basic residues.

The protein belongs to the universal ribosomal protein uS11 family. Part of the 30S ribosomal subunit. Interacts with proteins S7 and S18. Binds to IF-3.

Located on the platform of the 30S subunit, it bridges several disparate RNA helices of the 16S rRNA. Forms part of the Shine-Dalgarno cleft in the 70S ribosome. The protein is Small ribosomal subunit protein uS11 of Kineococcus radiotolerans (strain ATCC BAA-149 / DSM 14245 / SRS30216).